The following is a 270-amino-acid chain: Pre-mRNA-splicing factor CWC23 (270 aa).

Residues 12–84 enclose the J domain; that stretch reads DLYRILHIHV…EHKKEYDIWY (73 aa).

The protein belongs to the DnaJ family. As to quaternary structure, associated with the spliceosome.

The protein resides in the cytoplasm. The protein localises to the nucleus. Its function is as follows. Involved in pre-mRNA splicing. May be involved in endoplasmic reticulum-associated protein degradation (ERAD) and required for growth at low and high temperatures. This Kluyveromyces lactis (strain ATCC 8585 / CBS 2359 / DSM 70799 / NBRC 1267 / NRRL Y-1140 / WM37) (Yeast) protein is Pre-mRNA-splicing factor CWC23 (CWC23).